The chain runs to 519 residues: Bifunctional purine biosynthesis protein PurH (519 aa).

The MGS-like domain occupies 1 to 145 (MQPIQRALIS…KNHASVTVVV (145 aa)).

The protein belongs to the PurH family.

It carries out the reaction (6R)-10-formyltetrahydrofolate + 5-amino-1-(5-phospho-beta-D-ribosyl)imidazole-4-carboxamide = 5-formamido-1-(5-phospho-D-ribosyl)imidazole-4-carboxamide + (6S)-5,6,7,8-tetrahydrofolate. The catalysed reaction is IMP + H2O = 5-formamido-1-(5-phospho-D-ribosyl)imidazole-4-carboxamide. Its pathway is purine metabolism; IMP biosynthesis via de novo pathway; 5-formamido-1-(5-phospho-D-ribosyl)imidazole-4-carboxamide from 5-amino-1-(5-phospho-D-ribosyl)imidazole-4-carboxamide (10-formyl THF route): step 1/1. It functions in the pathway purine metabolism; IMP biosynthesis via de novo pathway; IMP from 5-formamido-1-(5-phospho-D-ribosyl)imidazole-4-carboxamide: step 1/1. This chain is Bifunctional purine biosynthesis protein PurH, found in Allochromatium vinosum (strain ATCC 17899 / DSM 180 / NBRC 103801 / NCIMB 10441 / D) (Chromatium vinosum).